Here is a 126-residue protein sequence, read N- to C-terminus: Penicillinase repressor (126 aa).

Positions 7–71 (EISMAEWDVM…KSENIYFYSS (65 aa)) form a DNA-binding region, H-T-H motif. The interval 74–126 (KEDDIKMKTAKTFLNKLYGGDMKSLVLNFAKNEELNNKEIEELRDILNDISKK) is important for dimerization.

This sequence belongs to the BlaI transcriptional regulatory family. As to quaternary structure, homodimer. In terms of processing, upon exposure to beta-lactams, the protease BlaR1 is activated and cleaves BlaI at a single site. This proteolytic cleavage impairs dimerization and abolishes repressor activity.

The protein resides in the cytoplasm. Functionally, transcriptional repressor that constitutively blocks expression of beta-lactamase. Binds DNA as a dimer. The sequence is that of Penicillinase repressor (blaI) from Staphylococcus aureus.